The primary structure comprises 597 residues: Elongation factor 4 (597 aa).

In terms of domain architecture, tr-type G spans 2 to 184 (NNIRNFSIIA…SLITKVPPPK (183 aa)). Residues 14–19 (DHGKST) and 131–134 (NKID) contribute to the GTP site.

Belongs to the TRAFAC class translation factor GTPase superfamily. Classic translation factor GTPase family. LepA subfamily.

It localises to the cell inner membrane. It carries out the reaction GTP + H2O = GDP + phosphate + H(+). Its function is as follows. Required for accurate and efficient protein synthesis under certain stress conditions. May act as a fidelity factor of the translation reaction, by catalyzing a one-codon backward translocation of tRNAs on improperly translocated ribosomes. Back-translocation proceeds from a post-translocation (POST) complex to a pre-translocation (PRE) complex, thus giving elongation factor G a second chance to translocate the tRNAs correctly. Binds to ribosomes in a GTP-dependent manner. This chain is Elongation factor 4, found in Janthinobacterium sp. (strain Marseille) (Minibacterium massiliensis).